A 29-amino-acid polypeptide reads, in one-letter code: Cytochrome b6-f complex subunit 8 (29 aa).

Residues 3–23 (IDVLGWVALLVVFTWSIAMVV) form a helical membrane-spanning segment.

This sequence belongs to the PetN family. As to quaternary structure, the 4 large subunits of the cytochrome b6-f complex are cytochrome b6, subunit IV (17 kDa polypeptide, PetD), cytochrome f and the Rieske protein, while the 4 small subunits are PetG, PetL, PetM and PetN. The complex functions as a dimer.

Its subcellular location is the cellular thylakoid membrane. Its function is as follows. Component of the cytochrome b6-f complex, which mediates electron transfer between photosystem II (PSII) and photosystem I (PSI), cyclic electron flow around PSI, and state transitions. This is Cytochrome b6-f complex subunit 8 from Mastigocladus laminosus (Fischerella sp.).